We begin with the raw amino-acid sequence, 628 residues long: DNA-directed RNA polymerase III subunit RPC3 (628 aa).

Acidic residues predominate over residues E360–D383. The disordered stretch occupies residues E360–D422. Residues T390 to T406 are compositionally biased toward low complexity. Over residues V408 to D422 the composition is skewed to basic and acidic residues. The interval G555–V576 is leucine-zipper.

The protein belongs to the RNA polymerase beta chain family. As to quaternary structure, component of the RNA polymerase III (Pol III) complex consisting of 17 subunits.

It is found in the nucleus. Functionally, DNA-dependent RNA polymerase catalyzes the transcription of DNA into RNA using the four ribonucleoside triphosphates as substrates. Specific core component of RNA polymerase III which synthesizes small RNAs, such as 5S rRNA and tRNAs. In Chaetomium globosum (strain ATCC 6205 / CBS 148.51 / DSM 1962 / NBRC 6347 / NRRL 1970) (Soil fungus), this protein is DNA-directed RNA polymerase III subunit RPC3 (RPC82).